The chain runs to 411 residues: Cytochrome P450 monooxygenase sirE (411 aa).

N-linked (GlcNAc...) asparagine glycosylation is found at asparagine 12 and asparagine 149. The helical transmembrane segment at phenylalanine 181–alanine 203 threads the bilayer. Asparagine 342 carries an N-linked (GlcNAc...) asparagine glycan. Cysteine 352 serves as a coordination point for heme.

The protein belongs to the cytochrome P450 family. Requires heme as cofactor.

It is found in the membrane. Its pathway is mycotoxin biosynthesis. Its function is as follows. Cytochrome P450 monooxygenase; part of the gene cluster that mediates the biosynthesis of sirodesmin PL, an epipolythiodioxopiperazine (ETP) characterized by a disulfide bridged cyclic dipeptide and that acts as a phytotoxin which is involved in the blackleg didease of canola. SirD catalyzes the O-prenylation of L-tyrosine (L-Tyr) in the presence of dimethylallyl diphosphate (DMAPP) to yield 4-O-dimethylallyl-L-Tyr, and therefore represents probably the first pathway-specific enzyme in the biosynthesis of sirodesmin PL. 4-O-dimethylallyl-L-Tyr, then undergoes condensation with L-Ser in a reaction catalyzed by the non-ribosomal peptide synthase sirP to form the diketopiperazine (DKP) backbone. Further bishydroxylation of the DKP performed by the cytochrome P450 monooxygenase sirC leads to the production of the intermediate phomamide. This step is essential to form the reactive thiol group required for toxicity of sirodesmin PL. The next steps of sirodesmin biosynthesis are not well understood yet, but some predictions could be made from intermediate compounds identification. Phomamide is converted into phomalizarine via oxidation, probably by sirT. Further oxidation, methylation (by sirM or sirN) and reduction steps convert phomalizarine to deacetyl sirodesmin. Finally, acetyltransferase sirH probably acetylates deacetyl sirodesmin to produce sirodesmin PL. In Leptosphaeria maculans (Blackleg fungus), this protein is Cytochrome P450 monooxygenase sirE.